Here is a 387-residue protein sequence, read N- to C-terminus: Patatin-03 (387 aa).

The signal sequence occupies residues 1–23 (MATTKSVLVLIFMILATTSSTFA). In terms of domain architecture, PNPLA spans 32-230 (LSIDGGGIKG…TVADPALLSV (199 aa)). Positions 36-41 (GGGIKG) match the GXGXXG motif. Residues 75–79 (GTSTG) carry the GXSXG motif. S77 serves as the catalytic Nucleophile. N115 and N203 each carry an N-linked (GlcNAc...) asparagine glycan. D216 (proton acceptor) is an active-site residue. A DGA/G motif is present at residues 216 to 218 (DGA).

Belongs to the patatin family. Tuber.

It localises to the vacuole. Probable lipolytic acyl hydrolase (LAH), an activity which is thought to be involved in the response of tubers to pathogens. The chain is Patatin-03 from Solanum tuberosum (Potato).